Consider the following 389-residue polypeptide: GDP-fucose protein O-fucosyltransferase 1 (389 aa).

The N-terminal stretch at 1–21 is a signal peptide; sequence MRVSKVLTLASFISVCSYSEA. A glycan (N-linked (GlcNAc...) asparagine) is linked at asparagine 24. Cysteine 35 and cysteine 37 form a disulfide bridge. 40-43 lines the substrate pocket; sequence RFGN. Cysteine 119 and cysteine 135 are disulfide-bonded. 238–240 is a binding site for substrate; sequence HLR. Cystine bridges form between cysteine 249–cysteine 281 and cysteine 266–cysteine 353. 356-357 is a binding site for substrate; that stretch reads TF.

It belongs to the glycosyltransferase 65 family. In terms of assembly, monomer.

It localises to the endoplasmic reticulum. The enzyme catalyses L-seryl-[protein] + GDP-beta-L-fucose = 3-O-(alpha-L-fucosyl)-L-seryl-[protein] + GDP + H(+). The catalysed reaction is L-threonyl-[protein] + GDP-beta-L-fucose = 3-O-(alpha-L-fucosyl)-L-threonyl-[protein] + GDP + H(+). Its pathway is protein modification; protein glycosylation. In terms of biological role, catalyzes the reaction that attaches fucose through an O-glycosidic linkage to a conserved serine or threonine residue found in the consensus sequence C2-X(4,5)-[S/T]-C3 of EGF domains, where C2 and C3 are the second and third conserved cysteines. Specifically uses GDP-fucose as donor substrate and proper disulfide pairing of the substrate EGF domains is required for fucose transfer. This chain is GDP-fucose protein O-fucosyltransferase 1, found in Caenorhabditis elegans.